A 247-amino-acid chain; its full sequence is ATP synthase subunit a, chloroplastic (247 aa).

The next 5 helical transmembrane spans lie at 38–58, 95–115, 134–154, 199–219, and 220–240; these read QVLI…TLAV, VPFI…GALL, INTT…AGLT, LVVV…VMFL, and GLFT…AYIG.

It belongs to the ATPase A chain family. F-type ATPases have 2 components, CF(1) - the catalytic core - and CF(0) - the membrane proton channel. CF(1) has five subunits: alpha(3), beta(3), gamma(1), delta(1), epsilon(1). CF(0) has four main subunits: a, b, b' and c.

The protein localises to the plastid. It is found in the chloroplast thylakoid membrane. Key component of the proton channel; it plays a direct role in the translocation of protons across the membrane. The polypeptide is ATP synthase subunit a, chloroplastic (Jasminum nudiflorum (Winter jasmine)).